The chain runs to 233 residues: Ribosome-recycling factor, mitochondrial (233 aa).

This sequence belongs to the RRF family.

The protein localises to the mitochondrion. Its function is as follows. Necessary for protein synthesis in mitochondria. Functions as a ribosome recycling factor in mitochondria. This is Ribosome-recycling factor, mitochondrial (RRF1) from Candida glabrata (strain ATCC 2001 / BCRC 20586 / JCM 3761 / NBRC 0622 / NRRL Y-65 / CBS 138) (Yeast).